The following is a 320-amino-acid chain: MQANQDTHNAQSKLTDSNESTGDKLSILVVSGRSGSGKTSVLNILEDLGFYSIDNLPLSLVPEAAQKLVCDSGIKRIALGVDIRTPRADLSNFDAIHDSLKQTYGEEAVTVMYVTAQEETLVARFNATRRIHPLMVLDTKGVENNVYNLPAAIEKEIQLLQPIFKHADIKIDTSMLNIHQLKERLRDYVGVDNQIVINLLSFGFKYGSPIDADFVFDVRILPNPHWNPTLRSATGLDAEVSAFFADYPEVAEMTGDIATFLNRWLPDFLHNNRHTVTVAIGCTGGKHRSVFITKHLQDRLQNSLPEGLTVTAKHREKHRW.

32 to 39 (GRSGSGKT) lines the ATP pocket. Position 82–85 (82–85 (DIRT)) interacts with GTP.

It belongs to the RapZ-like family.

Displays ATPase and GTPase activities. The sequence is that of Nucleotide-binding protein Pcryo_0127 from Psychrobacter cryohalolentis (strain ATCC BAA-1226 / DSM 17306 / VKM B-2378 / K5).